An 808-amino-acid chain; its full sequence is Piwi-like protein 1 (808 aa).

The region spanning 214–333 (RINRVLNENN…IPGELCYLCG (120 aa)) is the PAZ domain. The disordered stretch occupies residues 300 to 322 (SMVRPKEKTENEPEGPTETDQSL). A Piwi domain is found at 492 to 790 (HMALVFIPDD…LAELVGKIHR (299 aa)).

Belongs to the argonaute family. Piwi subfamily. As to expression, expressed in dividing adult somatic stem cells (neoblasts).

In Schmidtea mediterranea (Freshwater planarian flatworm), this protein is Piwi-like protein 1 (wi-1).